The sequence spans 508 residues: Probable malate:quinone oxidoreductase (508 aa).

Belongs to the MQO family. It depends on FAD as a cofactor.

The catalysed reaction is (S)-malate + a quinone = a quinol + oxaloacetate. It functions in the pathway carbohydrate metabolism; tricarboxylic acid cycle; oxaloacetate from (S)-malate (quinone route): step 1/1. The sequence is that of Probable malate:quinone oxidoreductase from Chromohalobacter salexigens (strain ATCC BAA-138 / DSM 3043 / CIP 106854 / NCIMB 13768 / 1H11).